The chain runs to 485 residues: Malonate-semialdehyde dehydrogenase (485 aa).

Residues F155, K179, E182, R183, and S232 each contribute to the NAD(+) site. The active-site Nucleophile is the C287. An NAD(+)-binding site is contributed by E386.

Belongs to the aldehyde dehydrogenase family. IolA subfamily. Homotetramer.

The catalysed reaction is 3-oxopropanoate + NAD(+) + CoA + H2O = hydrogencarbonate + acetyl-CoA + NADH + H(+). The enzyme catalyses 2-methyl-3-oxopropanoate + NAD(+) + CoA + H2O = propanoyl-CoA + hydrogencarbonate + NADH + H(+). The protein operates within polyol metabolism; myo-inositol degradation into acetyl-CoA; acetyl-CoA from myo-inositol: step 7/7. Catalyzes the oxidation of malonate semialdehyde (MSA) and methylmalonate semialdehyde (MMSA) into acetyl-CoA and propanoyl-CoA, respectively. Is involved in a myo-inositol catabolic pathway. Bicarbonate, and not CO2, is the end-product of the enzymatic reaction. The polypeptide is Malonate-semialdehyde dehydrogenase (Halalkalibacterium halodurans (strain ATCC BAA-125 / DSM 18197 / FERM 7344 / JCM 9153 / C-125) (Bacillus halodurans)).